The following is a 308-amino-acid chain: Ribosomal RNA small subunit methyltransferase H (308 aa).

Residues 36 to 38, Asp-55, Phe-86, Asp-103, and Gln-110 each bind S-adenosyl-L-methionine; that span reads GGH.

This sequence belongs to the methyltransferase superfamily. RsmH family.

The protein localises to the cytoplasm. The catalysed reaction is cytidine(1402) in 16S rRNA + S-adenosyl-L-methionine = N(4)-methylcytidine(1402) in 16S rRNA + S-adenosyl-L-homocysteine + H(+). Its function is as follows. Specifically methylates the N4 position of cytidine in position 1402 (C1402) of 16S rRNA. In Helicobacter pylori (strain B38), this protein is Ribosomal RNA small subunit methyltransferase H.